A 601-amino-acid chain; its full sequence is Transcription factor ATEG_07666 (601 aa).

A DNA-binding region (zn(2)-C6 fungal-type) is located at residues 17 to 44 (CEECRRRKARCDRVRPKCGFCTENGMQC).

The protein localises to the nucleus. Functionally, specific transcriptional regulator for the azasperpyranone A biosynthesis cluster B. The chain is Transcription factor ATEG_07666 from Aspergillus terreus (strain NIH 2624 / FGSC A1156).